Reading from the N-terminus, the 546-residue chain is Chaperonin GroEL (546 aa).

Residues 30–33 (TLGP), lysine 51, 87–91 (DGTTT), glycine 415, 479–481 (NAA), and aspartate 495 contribute to the ATP site. Residues 526 to 546 (KEDAPMPGGMPGGMGGMGMDM) are disordered. Residues 534-546 (GMPGGMGGMGMDM) are compositionally biased toward gly residues.

Belongs to the chaperonin (HSP60) family. Forms a cylinder of 14 subunits composed of two heptameric rings stacked back-to-back. Interacts with the co-chaperonin GroES.

It localises to the cytoplasm. It catalyses the reaction ATP + H2O + a folded polypeptide = ADP + phosphate + an unfolded polypeptide.. In terms of biological role, together with its co-chaperonin GroES, plays an essential role in assisting protein folding. The GroEL-GroES system forms a nano-cage that allows encapsulation of the non-native substrate proteins and provides a physical environment optimized to promote and accelerate protein folding. The sequence is that of Chaperonin GroEL from Burkholderia cepacia (Pseudomonas cepacia).